A 500-amino-acid chain; its full sequence is MQVLILLSLAFLASCVVAYSRRRPGGRGAGNLPPGPPRLPIIGNMLQLGQNPHKSLAHLAKTYGPLMSLKLGNQFVVVVSSPEMAREVLQRHGLVFSTPCAPIAVQILGHGEVSMNMLPATSPIWKKLRKIAREKLFSNQALHDTRAVRWERLRKLADYVGRCSGAMNVGEATFTTMSNLMFSTLFSVEITQYADSDSDSGVNKKFREHVNAITRYIGVPNIADFFPIFAPFDPQGLRRKLTYHFGSLLELVQSLIEQRLRARNAATYRKKDDFLEMLLDLSEGDEYDLSVNEIKHLCVDLIIAGSDTSAATTEWAMVELLLHPDKLAKLKAELKSVVGDKSIIEESDISKLPYLQATVKEVLRYHPAAPLLAPHLAEEETQLNGYIIPKNTKIFINDWTISRDPSIWKNPEMFEPERFLDNDIDFCGQHFELIPFGSGRRICPGLPLASRMLHCMVATLCHNFDWELEKGTESKQLQREDVFGLALQKKIPLRAIPIKV.

A helical membrane pass occupies residues 4–24; it reads LILLSLAFLASCVVAYSRRRP. Cysteine 443 contacts heme.

This sequence belongs to the cytochrome P450 family. Heme is required as a cofactor. In terms of tissue distribution, mostly expressed in young leaves, particularly in glandular trichomes.

It is found in the membrane. The enzyme catalyses 11-hydroxyferruginol + 3 reduced [NADPH--hemoprotein reductase] + 3 O2 = carnosate + 3 oxidized [NADPH--hemoprotein reductase] + 4 H2O + 4 H(+). It catalyses the reaction miltiradiene + 2 reduced [NADPH--hemoprotein reductase] + 2 O2 = miltiradien-20-al + 2 oxidized [NADPH--hemoprotein reductase] + 3 H2O + 2 H(+). The catalysed reaction is ferruginol + 3 reduced [NADPH--hemoprotein reductase] + 3 O2 = pisiferate + 3 oxidized [NADPH--hemoprotein reductase] + 4 H2O + 4 H(+). It participates in secondary metabolite biosynthesis; terpenoid biosynthesis. In terms of biological role, monooxygenase involved in the biosynthesis of carnosate, a potent antioxidant labdane-related diterpene natural product. Catalyzes the oxidation of 11-hydroxyferruginol to produce carnosate. Mediates the conversion of miltiradien into miltiradien-20-al. Also involved in the production of pisiferic acid and derivative products from ferruginol. This Salvia fruticosa (Greek sage) protein is Carnosic acid synthase.